We begin with the raw amino-acid sequence, 507 residues long: Cystathionine beta-synthase (507 aa).

Lys53 is subject to N6-(pyridoxal phosphate)lysine. Asn84 is a binding site for pyridoxal 5'-phosphate. Ser134 carries the phosphoserine modification. Pyridoxal 5'-phosphate contacts are provided by residues 196-200 (GTGGT) and Ser289. A phosphoserine mark is found at Ser350 and Ser424. One can recognise a CBS domain in the interval 373–432 (HLKPVVSVKETAKVTDVIKILKDNGFDQLPVLTEDGKLSGLVTLSELLRKLSINNSNNDN).

Belongs to the cysteine synthase/cystathionine beta-synthase family. Requires pyridoxal 5'-phosphate as cofactor.

It catalyses the reaction L-homocysteine + L-serine = L,L-cystathionine + H2O. Its pathway is amino-acid biosynthesis; L-cysteine biosynthesis; L-cysteine from L-homocysteine and L-serine: step 1/2. This Saccharomyces cerevisiae (strain ATCC 204508 / S288c) (Baker's yeast) protein is Cystathionine beta-synthase (CYS4).